Reading from the N-terminus, the 429-residue chain is Ribosomal RNA small subunit methyltransferase B (429 aa).

Residues 254–260 (CAAPGGK), D277, D303, and D322 contribute to the S-adenosyl-L-methionine site. C375 serves as the catalytic Nucleophile.

Belongs to the class I-like SAM-binding methyltransferase superfamily. RsmB/NOP family.

It is found in the cytoplasm. The enzyme catalyses cytidine(967) in 16S rRNA + S-adenosyl-L-methionine = 5-methylcytidine(967) in 16S rRNA + S-adenosyl-L-homocysteine + H(+). Functionally, specifically methylates the cytosine at position 967 (m5C967) of 16S rRNA. This chain is Ribosomal RNA small subunit methyltransferase B, found in Escherichia coli O6:H1 (strain CFT073 / ATCC 700928 / UPEC).